The sequence spans 289 residues: 4-hydroxy-3-methylbut-2-enyl diphosphate reductase (289 aa).

Cysteine 13 contacts [4Fe-4S] cluster. Histidine 42 and histidine 76 together coordinate (2E)-4-hydroxy-3-methylbut-2-enyl diphosphate. 2 residues coordinate dimethylallyl diphosphate: histidine 42 and histidine 76. Positions 42 and 76 each coordinate isopentenyl diphosphate. Cysteine 98 is a [4Fe-4S] cluster binding site. Histidine 130 contacts (2E)-4-hydroxy-3-methylbut-2-enyl diphosphate. Histidine 130 provides a ligand contact to dimethylallyl diphosphate. Histidine 130 is a binding site for isopentenyl diphosphate. The Proton donor role is filled by glutamate 132. Threonine 168 serves as a coordination point for (2E)-4-hydroxy-3-methylbut-2-enyl diphosphate. Cysteine 199 serves as a coordination point for [4Fe-4S] cluster. (2E)-4-hydroxy-3-methylbut-2-enyl diphosphate contacts are provided by serine 227, serine 228, asparagine 229, and serine 272. The dimethylallyl diphosphate site is built by serine 227, serine 228, asparagine 229, and serine 272. Positions 227, 228, 229, and 272 each coordinate isopentenyl diphosphate.

It belongs to the IspH family. Requires [4Fe-4S] cluster as cofactor.

It catalyses the reaction isopentenyl diphosphate + 2 oxidized [2Fe-2S]-[ferredoxin] + H2O = (2E)-4-hydroxy-3-methylbut-2-enyl diphosphate + 2 reduced [2Fe-2S]-[ferredoxin] + 2 H(+). The enzyme catalyses dimethylallyl diphosphate + 2 oxidized [2Fe-2S]-[ferredoxin] + H2O = (2E)-4-hydroxy-3-methylbut-2-enyl diphosphate + 2 reduced [2Fe-2S]-[ferredoxin] + 2 H(+). The protein operates within isoprenoid biosynthesis; dimethylallyl diphosphate biosynthesis; dimethylallyl diphosphate from (2E)-4-hydroxy-3-methylbutenyl diphosphate: step 1/1. Its pathway is isoprenoid biosynthesis; isopentenyl diphosphate biosynthesis via DXP pathway; isopentenyl diphosphate from 1-deoxy-D-xylulose 5-phosphate: step 6/6. Its function is as follows. Catalyzes the conversion of 1-hydroxy-2-methyl-2-(E)-butenyl 4-diphosphate (HMBPP) into a mixture of isopentenyl diphosphate (IPP) and dimethylallyl diphosphate (DMAPP). Acts in the terminal step of the DOXP/MEP pathway for isoprenoid precursor biosynthesis. This chain is 4-hydroxy-3-methylbut-2-enyl diphosphate reductase, found in Porphyromonas gingivalis (strain ATCC BAA-308 / W83).